The sequence spans 555 residues: MFS-type transporter VdtG (555 aa).

The segment at 1-20 (MNGNGTADKPGPPGGKPFGP) is disordered. Residue N4 is glycosylated (N-linked (GlcNAc...) asparagine). 3 helical membrane-spanning segments follow: residues 30–50 (TGFK…LTAL), 71–91 (DIGW…LLFG), and 101–121 (WVFL…GAAP). N122 is a glycosylation site (N-linked (GlcNAc...) asparagine). 2 helical membrane-spanning segments follow: residues 132 to 152 (IAGL…FFTV) and 162 to 182 (GIAG…GGGF). N-linked (GlcNAc...) asparagine glycosylation is present at N185. The next 4 membrane-spanning stretches (helical) occupy residues 190–210 (WCFY…LLFL), 232–252 (LGNL…QWGG), 262–282 (IVAL…VQLW), and 304–324 (AFTI…PIWF). N329 is a glycosylation site (N-linked (GlcNAc...) asparagine). The next 5 helical transmembrane spans lie at 337–357 (VMML…GFII), 364–384 (TPFM…LTTF), 393–413 (WIGY…QASL), 425–445 (PIGI…FLAV), and 497–517 (LMDV…AAAF). Residues 528–555 (AAGPGGPGGPGGPGGPGGPEGLRGGNKV) form a disordered region. Over residues 530-555 (GPGGPGGPGGPGGPGGPEGLRGGNKV) the composition is skewed to gly residues.

This sequence belongs to the major facilitator superfamily. TCR/Tet family.

It is found in the endoplasmic reticulum membrane. MFS-type transporter; part of the gene cluster that mediates the biosynthesis of viriditoxin, one of the 'classical' secondary metabolites produced by fungi and that has antibacterial activity. Is not essential for viriditoxin production. The polypeptide is MFS-type transporter VdtG (Byssochlamys spectabilis (Paecilomyces variotii)).